The chain runs to 112 residues: Cryptic phage CTXphi transcriptional repressor RstR (112 aa).

The HTH cro/C1-type domain occupies 7–61; the sequence is LANQRKAINKTQAQMADEIGISLTSYKKYESGEGLPTMENLVKIADALEISIDEL. The H-T-H motif DNA-binding region spans 18 to 37; sequence QAQMADEIGISLTSYKKYES.

Transcriptional repressor of the integrated CTXPhi phage gene rstA2. This Vibrio cholerae serotype O1 (strain ATCC 39315 / El Tor Inaba N16961) protein is Cryptic phage CTXphi transcriptional repressor RstR (rstR1).